The following is a 29-amino-acid chain: Cyclotide mech-3 (29 aa).

A cross-link (cyclopeptide (Gly-Asn)) is located at residues 1–29 (GLPTCGETCTLGKCNTPKCTCNWPICYKN). Intrachain disulfides connect Cys-5–Cys-19, Cys-9–Cys-21, and Cys-14–Cys-26.

In terms of processing, this is a cyclic peptide. Post-translationally, contains 3 disulfide bonds.

Probably participates in a plant defense mechanism (Potential). Binds to and induces leakage in phospholipd membranes, particularly ones containing 1-palmitoyl-2-oleophosphatidylethanolamine (POPE). In vitro, displays cytotoxicity against cultured cells but no hemolytic activity towards fresh erythrocytes. This chain is Cyclotide mech-3, found in Melicytus chathamicus (Chatham Island mahoe).